A 423-amino-acid chain; its full sequence is Imidazolonepropionase (423 aa).

Fe(3+) is bound by residues His78 and His80. Residues His78 and His80 each coordinate Zn(2+). Residues Arg87, Tyr150, and His183 each contribute to the 4-imidazolone-5-propanoate site. N-formimidoyl-L-glutamate is bound at residue Tyr150. His247 provides a ligand contact to Fe(3+). Position 247 (His247) interacts with Zn(2+). Glu250 provides a ligand contact to 4-imidazolone-5-propanoate. Position 322 (Asp322) interacts with Fe(3+). Asp322 serves as a coordination point for Zn(2+). Positions 324 and 326 each coordinate N-formimidoyl-L-glutamate. Ser327 provides a ligand contact to 4-imidazolone-5-propanoate.

It belongs to the metallo-dependent hydrolases superfamily. HutI family. Zn(2+) is required as a cofactor. The cofactor is Fe(3+).

Its subcellular location is the cytoplasm. It carries out the reaction 4-imidazolone-5-propanoate + H2O = N-formimidoyl-L-glutamate. Its pathway is amino-acid degradation; L-histidine degradation into L-glutamate; N-formimidoyl-L-glutamate from L-histidine: step 3/3. Its function is as follows. Catalyzes the hydrolytic cleavage of the carbon-nitrogen bond in imidazolone-5-propanoate to yield N-formimidoyl-L-glutamate. It is the third step in the universal histidine degradation pathway. The polypeptide is Imidazolonepropionase (Bacillus cereus (strain ATCC 14579 / DSM 31 / CCUG 7414 / JCM 2152 / NBRC 15305 / NCIMB 9373 / NCTC 2599 / NRRL B-3711)).